The chain runs to 303 residues: Mycothiol acetyltransferase (303 aa).

2 consecutive N-acetyltransferase domains span residues 6–134 and 154–303; these read TSLA…VEGD and NEAY…QSSS. Glu37 is a binding site for 1D-myo-inositol 2-(L-cysteinylamino)-2-deoxy-alpha-D-glucopyranoside. Residues 75–77 and 83–88 contribute to the acetyl-CoA site; these read VVV and RQGYGS. Residues Glu180, Lys221, and Glu233 each contribute to the 1D-myo-inositol 2-(L-cysteinylamino)-2-deoxy-alpha-D-glucopyranoside site. Residues 237 to 239 and 244 to 250 each bind acetyl-CoA; these read VGL and RRRGLGD. Position 271 (Tyr271) interacts with 1D-myo-inositol 2-(L-cysteinylamino)-2-deoxy-alpha-D-glucopyranoside. 276-281 contributes to the acetyl-CoA binding site; sequence NESARR.

The protein belongs to the acetyltransferase family. MshD subfamily. As to quaternary structure, monomer.

It catalyses the reaction 1D-myo-inositol 2-(L-cysteinylamino)-2-deoxy-alpha-D-glucopyranoside + acetyl-CoA = mycothiol + CoA + H(+). Catalyzes the transfer of acetyl from acetyl-CoA to desacetylmycothiol (Cys-GlcN-Ins) to form mycothiol. The chain is Mycothiol acetyltransferase from Corynebacterium diphtheriae (strain ATCC 700971 / NCTC 13129 / Biotype gravis).